Consider the following 288-residue polypeptide: Pyridoxal kinase PdxY (288 aa).

Residues S10 and 45–46 (TQ) contribute to the substrate site. ATP contacts are provided by D112, A143, E148, and K181. Residue D222 participates in substrate binding.

This sequence belongs to the pyridoxine kinase family. PdxY subfamily. Homodimer. It depends on Mg(2+) as a cofactor.

It carries out the reaction pyridoxal + ATP = pyridoxal 5'-phosphate + ADP + H(+). The protein operates within cofactor metabolism; pyridoxal 5'-phosphate salvage; pyridoxal 5'-phosphate from pyridoxal: step 1/1. Pyridoxal kinase involved in the salvage pathway of pyridoxal 5'-phosphate (PLP). Catalyzes the phosphorylation of pyridoxal to PLP. The polypeptide is Pyridoxal kinase PdxY (Paraburkholderia xenovorans (strain LB400)).